The sequence spans 283 residues: Glutamate racemase (283 aa).

Substrate contacts are provided by residues 13-14 (DS) and 45-46 (YG). C76 serves as the catalytic Proton donor/acceptor. Residue 77–78 (NT) participates in substrate binding. C186 (proton donor/acceptor) is an active-site residue. 187-188 (TH) contacts substrate.

It belongs to the aspartate/glutamate racemases family.

It catalyses the reaction L-glutamate = D-glutamate. Its pathway is cell wall biogenesis; peptidoglycan biosynthesis. Provides the (R)-glutamate required for cell wall biosynthesis. This chain is Glutamate racemase, found in Microcystis aeruginosa (strain NIES-843 / IAM M-2473).